A 1615-amino-acid chain; its full sequence is Ferredoxin-dependent glutamate synthase, chloroplastic (1615 aa).

Residues 1-52 (MATLPRAAAAAAPSPAAALLPLPRAAPLLAGRAAARSAARRLRARGTRAPPL) constitute a chloroplast transit peptide. C97 (nucleophile) is an active-site residue. One can recognise a Glutamine amidotransferase type-2 domain in the interval 97–496 (CGVGFVANLK…PGMMITVDLQ (400 aa)). 1175 to 1232 (LSETHQTLIQNGLRERVVLRVDGGFRSGLDVLMAAAMGADEYGFGSVAMIATGCVMAR) is an FMN binding site. Residues C1228, C1234, and C1239 each contribute to the [3Fe-4S] cluster site.

This sequence belongs to the glutamate synthase family. [3Fe-4S] cluster serves as cofactor. The cofactor is FAD. It depends on FMN as a cofactor. As to expression, expressed in leaf blades and at lower levels in roots.

It localises to the plastid. The protein resides in the chloroplast. It carries out the reaction 2 oxidized [2Fe-2S]-[ferredoxin] + 2 L-glutamate = L-glutamine + 2 reduced [2Fe-2S]-[ferredoxin] + 2-oxoglutarate + 2 H(+). The protein operates within amino-acid biosynthesis; L-glutamate biosynthesis via GLT pathway; L-glutamate from 2-oxoglutarate and L-glutamine (ferredoxin route): step 1/1. Its pathway is energy metabolism; nitrogen metabolism. Functionally, involved in glutamate biosynthesis in leaf. Required for the reassimilation of ammonium ions generated during photorespiration. The chain is Ferredoxin-dependent glutamate synthase, chloroplastic (GLU) from Oryza sativa subsp. japonica (Rice).